The primary structure comprises 346 residues: N-acetyl-gamma-glutamyl-phosphate reductase (346 aa).

The active site involves cysteine 150.

Belongs to the NAGSA dehydrogenase family. Type 1 subfamily.

The protein resides in the cytoplasm. It carries out the reaction N-acetyl-L-glutamate 5-semialdehyde + phosphate + NADP(+) = N-acetyl-L-glutamyl 5-phosphate + NADPH + H(+). Its pathway is amino-acid biosynthesis; L-arginine biosynthesis; N(2)-acetyl-L-ornithine from L-glutamate: step 3/4. Catalyzes the NADPH-dependent reduction of N-acetyl-5-glutamyl phosphate to yield N-acetyl-L-glutamate 5-semialdehyde. The protein is N-acetyl-gamma-glutamyl-phosphate reductase of Desulforamulus reducens (strain ATCC BAA-1160 / DSM 100696 / MI-1) (Desulfotomaculum reducens).